Consider the following 151-residue polypeptide: Large ribosomal subunit protein bL9 (151 aa).

The protein belongs to the bacterial ribosomal protein bL9 family.

In terms of biological role, binds to the 23S rRNA. The chain is Large ribosomal subunit protein bL9 from Nitrosococcus oceani (strain ATCC 19707 / BCRC 17464 / JCM 30415 / NCIMB 11848 / C-107).